The chain runs to 80 residues: D-alanyl carrier protein (80 aa).

Positions 1-77 (MDIQKQIVDI…KLVEQVKKLQ (77 aa)) constitute a Carrier domain. O-(pantetheine 4'-phosphoryl)serine is present on Ser35.

The protein belongs to the DltC family. 4'-phosphopantetheine is transferred from CoA to a specific serine of apo-DCP.

The protein resides in the cytoplasm. The protein operates within cell wall biogenesis; lipoteichoic acid biosynthesis. In terms of biological role, carrier protein involved in the D-alanylation of lipoteichoic acid (LTA). The loading of thioester-linked D-alanine onto DltC is catalyzed by D-alanine--D-alanyl carrier protein ligase DltA. The DltC-carried D-alanyl group is further transferred to cell membrane phosphatidylglycerol (PG) by forming an ester bond, probably catalyzed by DltD. D-alanylation of LTA plays an important role in modulating the properties of the cell wall in Gram-positive bacteria, influencing the net charge of the cell wall. The chain is D-alanyl carrier protein from Lactobacillus delbrueckii subsp. bulgaricus (strain ATCC 11842 / DSM 20081 / BCRC 10696 / JCM 1002 / NBRC 13953 / NCIMB 11778 / NCTC 12712 / WDCM 00102 / Lb 14).